Reading from the N-terminus, the 292-residue chain is uncharacterized protein (292 aa).

Helical transmembrane passes span Ile57–Ile77, Val101–Met121, Leu143–Ile163, Val184–Leu204, and Ile271–Ile291.

It belongs to the CbiQ family.

It localises to the cell membrane. This is an uncharacterized protein from Methanocaldococcus jannaschii (strain ATCC 43067 / DSM 2661 / JAL-1 / JCM 10045 / NBRC 100440) (Methanococcus jannaschii).